The following is a 286-amino-acid chain: Urease accessory protein UreD 2 (286 aa).

Belongs to the UreD family. In terms of assembly, ureD, UreF and UreG form a complex that acts as a GTP-hydrolysis-dependent molecular chaperone, activating the urease apoprotein by helping to assemble the nickel containing metallocenter of UreC. The UreE protein probably delivers the nickel.

Its subcellular location is the cytoplasm. Required for maturation of urease via the functional incorporation of the urease nickel metallocenter. This Bradyrhizobium sp. (strain BTAi1 / ATCC BAA-1182) protein is Urease accessory protein UreD 2.